The following is a 328-amino-acid chain: Gonadotropin-releasing hormone receptor (328 aa).

The Extracellular portion of the chain corresponds to 1–38 (MANSDSPEQNENHCSSINSSIPLTPGSLPTLTLSGKIR). Residue asparagine 18 is glycosylated (N-linked (GlcNAc...) asparagine). A helical transmembrane segment spans residues 39-58 (VTVTFFLFLLSTIFNTSFLL). Residues 59–77 (KLQNWTQRKEKRKKLSRMK) lie on the Cytoplasmic side of the membrane. Residues 78 to 97 (LLLKHLTLANLLETLIVMPL) traverse the membrane as a helical segment. Residues 98-115 (DGMWNITVQWYAGELLCK) lie on the Extracellular side of the membrane. N-linked (GlcNAc...) asparagine glycosylation occurs at asparagine 102. Cysteine 114 and cysteine 196 are oxidised to a cystine. A helical membrane pass occupies residues 116–137 (VLSYLKLFSMYAPAFMMVVISL). The Cytoplasmic portion of the chain corresponds to 138–164 (DRSLAITKPLAVKSNSKLGQFMIGLAW). The chain crosses the membrane as a helical span at residues 165–184 (LLSSIFAGPQLYIFGMIHLA). Topologically, residues 185–212 (DDSGQTEGFSQCVTHCSFPQWWHQAFYN) are extracellular. The helical transmembrane segment at 213 to 232 (FFTFSCLFIIPLLIMVICNA) threads the bilayer. The Cytoplasmic portion of the chain corresponds to 233 to 281 (KIIFTLTRVLHQDPHKLQLNQSKNNIPRARLRTLKMTVAFATSFTVCWT). The chain crosses the membrane as a helical span at residues 282 to 300 (PYYVLGIWYWFDPDMVNRV). At 301 to 306 (SDPVNH) the chain is on the extracellular side. Residues 307–326 (FFFLFAFLNPCFNPLIYGYF) form a helical membrane-spanning segment. The Cytoplasmic portion of the chain corresponds to 327–328 (SL).

Belongs to the G-protein coupled receptor 1 family.

Its subcellular location is the cell membrane. Receptor for gonadotropin releasing hormone (GnRH) that mediates the action of GnRH to stimulate the secretion of the gonadotropic hormones luteinizing hormone (LH) and follicle-stimulating hormone (FSH). This receptor mediates its action by association with G-proteins that activate a phosphatidylinositol-calcium second messenger system. The chain is Gonadotropin-releasing hormone receptor (GNRHR) from Bos mutus grunniens (Wild yak).